A 23-amino-acid polypeptide reads, in one-letter code: U22-ctenitoxin-Co1a (23 aa).

As to expression, expressed by the venom gland.

It localises to the secreted. The sequence is that of U22-ctenitoxin-Co1a from Ctenus ornatus (Brazilian spider).